We begin with the raw amino-acid sequence, 415 residues long: S-inosyl-L-homocysteine hydrolase (415 aa).

Substrate-binding residues include D123 and E148. Position 149–151 (149–151 (TTT)) interacts with NAD(+). 2 residues coordinate substrate: K178 and D182. Residues N183, 212–217 (GYGWCG), E235, 291–293 (AGH), and N337 each bind NAD(+).

Belongs to the adenosylhomocysteinase family. The cofactor is NAD(+).

It is found in the cytoplasm. It catalyses the reaction S-inosyl-L-homocysteine + H2O = L-homocysteine + inosine. It participates in amino-acid biosynthesis; S-adenosyl-L-methionine biosynthesis. Its function is as follows. Catalyzes the hydrolysis of S-inosyl-L-homocysteine (SIH) to L-homocysteine (Hcy) and inosine. Likely functions in a S-adenosyl-L-methionine (SAM) recycling pathway from S-adenosyl-L-homocysteine (SAH) produced from SAM-dependent methylation reactions. Can also catalyze the reverse reaction in vitro, i.e. the synthesis of SIH from Hcy and inosine. The chain is S-inosyl-L-homocysteine hydrolase from Methanococcus maripaludis (strain DSM 14266 / JCM 13030 / NBRC 101832 / S2 / LL).